Reading from the N-terminus, the 124-residue chain is Heat-labile enterotoxin B chain (124 aa).

The N-terminal stretch at 1–21 (MNKVKCYVLFTALLSSLYAHG) is a signal peptide. A disulfide bridge connects residues C30 and C107.

Heterohexamer of one A chain and of five B chains.

In terms of biological role, the biological activity of the toxin is produced by the A chain, which activates intracellular adenyl cyclase. The sequence is that of Heat-labile enterotoxin B chain (eltB) from Escherichia coli.